Reading from the N-terminus, the 773-residue chain is ATP-dependent zinc metalloprotease YME1L1 (773 aa).

Over 1–295 the chain is Mitochondrial matrix; that stretch reads MFSLSSTVQP…TNDSLRRTRL (295 aa). The helical transmembrane segment at 296 to 316 threads the bilayer; it reads ILFVLLLFGIYGLLKNPFLSV. Topologically, residues 317 to 773 are mitochondrial intermembrane; the sequence is RFRTTTGLDS…VLEGKKLEVR (457 aa). ATP contacts are provided by Val-341, Thr-383, Gly-384, Lys-385, Thr-386, and Leu-387. His-599 serves as a coordination point for Zn(2+). The active site involves Glu-600. Zn(2+)-binding residues include His-603 and Asp-677.

This sequence in the N-terminal section; belongs to the AAA ATPase family. It in the C-terminal section; belongs to the peptidase M41 family. In terms of assembly, homohexamer; may also form heterohexamers. Exists in several complexes of 600-1100 kDa. Interacts with AFG1L. Requires Zn(2+) as cofactor. In terms of processing, proteolytically processed by mitochondrial processing peptidase (MPP) to generate the mature form. Degraded in an OMA1-dependent manner in response to oxidative stress. As to expression, high expression in cardiac and skeletal muscle mitochondria.

The protein resides in the mitochondrion inner membrane. It localises to the mitochondrion. It catalyses the reaction ATP + H2O = ADP + phosphate + H(+). Functionally, ATP-dependent metalloprotease that catalyzes the degradation of folded and unfolded proteins with a suitable degron sequence in the mitochondrial intermembrane region. Plays an important role in regulating mitochondrial morphology and function by cleaving OPA1 at position S2, giving rise to a form of OPA1 that promotes maintenance of normal mitochondrial structure and mitochondrial protein metabolism. Ensures cell proliferation, maintains normal cristae morphology and complex I respiration activity, promotes antiapoptotic activity and protects mitochondria from the accumulation of oxidatively damaged membrane proteins. Required to control the accumulation of nonassembled respiratory chain subunits (NDUFB6, OX4 and ND1). Involved in the mitochondrial adaptation in response to various signals, such as stress or developmental cues, by mediating degradation of mitochondrial proteins to rewire the mitochondrial proteome. Catalyzes degradation of mitochondrial proteins, such as translocases, lipid transfer proteins and metabolic enzymes in response to nutrient starvation in order to limit mitochondrial biogenesis: mechanistically, YME1L is activated by decreased phosphatidylethanolamine levels caused by LPIN1 activity in response to mTORC1 inhibition. Acts as a regulator of adult neural stem cell self-renewal by promoting mitochondrial proteome rewiring, preserving neural stem and progenitor cells self-renewal. Required for normal, constitutive degradation of PRELID1. Catalyzes the degradation of OMA1 in response to membrane depolarization. Mediates degradation of TIMM17A downstream of the integrated stress response (ISR). Catalyzes degradation of MICU1 when MICU1 is not assembled via an interchain disulfide. The sequence is that of ATP-dependent zinc metalloprotease YME1L1 (YME1L1) from Homo sapiens (Human).